A 447-amino-acid chain; its full sequence is Polyamine export protein (447 aa).

Residues 1 to 4 are Cytoplasmic-facing; sequence MLNS. The CNNM transmembrane domain maps to 1–197; it reads MLNSIFIIFC…ALAGVLRKQE (197 aa). The chain crosses the membrane as a helical span at residues 5–25; that stretch reads IFIIFCLIAVSAFFSISEISL. Residues 26-54 are Periplasmic-facing; it reads AASRKIKLKLLADEGSINAQRVLKMQENP. The chain crosses the membrane as a helical span at residues 55–75; it reads GMFFTVVQIGLNAVAILGGIV. The Cytoplasmic portion of the chain corresponds to 76–99; it reads GDAAFSPAFSALFSHYMSPELSEQ. Residues 100-120 traverse the membrane as a helical segment; it reads LSFILSFSLVTGLFILFADLT. Topologically, residues 121–141 are periplasmic; it reads PKRIGMIAPEAVALRIINPMR. The chain crosses the membrane as a helical span at residues 142–162; sequence FCLFVFRPLVWLFNGMANNIF. Residues 163–447 lie on the Cytoplasmic side of the membrane; that stretch reads RLFKIPMVRK…DAQGKEDSAA (285 aa). CBS domains are found at residues 216–275 and 282–343; these read MTSR…NQSM and QIRN…GLEE.

This sequence belongs to the UPF0053 family. PaeA subfamily.

Its subcellular location is the cell inner membrane. In terms of biological role, involved in cadaverine and putrescine tolerance in stationary phase. May facilitate the efflux of both cadaverine and putrescine from the cytoplasm, reducing potentially toxic levels under certain stress conditions. The protein is Polyamine export protein of Salmonella typhimurium (strain 14028s / SGSC 2262).